An 874-amino-acid chain; its full sequence is Bifunctional uridylyltransferase/uridylyl-removing enzyme (874 aa).

The segment at 1-332 (MTLQSPLTFR…NGGASEDAEI (332 aa)) is uridylyltransferase. The tract at residues 333 to 692 (IDEDFQRRGA…ISKKATRGGT (360 aa)) is uridylyl-removing. In terms of domain architecture, HD spans 451 to 573 (VDEHSIRLLK…VRDEEYLEYL (123 aa)). 2 ACT domains span residues 693 to 777 (EVFV…RTPN) and 800 to 874 (LMEF…SVSA).

Belongs to the GlnD family. Mg(2+) is required as a cofactor.

It carries out the reaction [protein-PII]-L-tyrosine + UTP = [protein-PII]-uridylyl-L-tyrosine + diphosphate. The enzyme catalyses [protein-PII]-uridylyl-L-tyrosine + H2O = [protein-PII]-L-tyrosine + UMP + H(+). Uridylyltransferase (UTase) activity is inhibited by glutamine, while glutamine activates uridylyl-removing (UR) activity. Modifies, by uridylylation and deuridylylation, the PII regulatory proteins (GlnB and homologs), in response to the nitrogen status of the cell that GlnD senses through the glutamine level. Under low glutamine levels, catalyzes the conversion of the PII proteins and UTP to PII-UMP and PPi, while under higher glutamine levels, GlnD hydrolyzes PII-UMP to PII and UMP (deuridylylation). Thus, controls uridylylation state and activity of the PII proteins, and plays an important role in the regulation of nitrogen assimilation and metabolism. This is Bifunctional uridylyltransferase/uridylyl-removing enzyme from Vibrio campbellii (strain ATCC BAA-1116).